We begin with the raw amino-acid sequence, 984 residues long: Putative formate dehydrogenase SH0748 (984 aa).

Residues 3–79 (EHLIVTLDGT…PMTVNTQNND (77 aa)) enclose the 2Fe-2S ferredoxin-type domain. Positions 37, 48, 51, and 63 each coordinate [2Fe-2S] cluster. The 4Fe-4S His(Cys)3-ligated-type domain occupies 79 to 119 (DVKASQKEALDRILEKHMLYCTVCDYNNGDCEIHNAMDAWG). 16 residues coordinate [4Fe-4S] cluster: His95, Cys99, Cys102, Cys109, Cys147, Cys150, Cys153, Cys157, Cys190, Cys193, Cys196, Cys200, Cys264, Cys267, Cys271, and Cys299. 2 consecutive 4Fe-4S ferredoxin-type domains span residues 138 to 165 (PFYR…VNET) and 181 to 211 (NDVP…VNME). The tract at residues 252–984 (MRKERIKKTK…YVFPGNVVDK (733 aa)) is formate dehydrogenase. The 57-residue stretch at 257 to 313 (IKKTKTVCTYCGVGCSFDVWTKDREVLKVQPSHDSPANKIATCVKGKFSWGHINSDQ) folds into the 4Fe-4S Mo/W bis-MGD-type domain.

In the C-terminal section; belongs to the prokaryotic molybdopterin-containing oxidoreductase family. Requires [2Fe-2S] cluster as cofactor. [4Fe-4S] cluster serves as cofactor. Mo-bis(molybdopterin guanine dinucleotide) is required as a cofactor.

It carries out the reaction formate + NAD(+) = CO2 + NADH. The sequence is that of Putative formate dehydrogenase SH0748 from Staphylococcus haemolyticus (strain JCSC1435).